We begin with the raw amino-acid sequence, 105 residues long: MFSPAVIVPFHPISFYRRPRLNNTYEFDGAKISTNLESVPNFISHAISEIRFAFYILYILYMKHNKSWNFLMISLSKEQKGSKTKKNKMYSNEFKSTPIIYSNVI.

This is an uncharacterized protein from Saccharomyces cerevisiae (strain ATCC 204508 / S288c) (Baker's yeast).